The chain runs to 199 residues: MRVGVLAVQGAFIEHEKILQNLGVECLELRNGKDARQDVEGLILPGGESTTQGKLLRELDMFEPLREKIVAGLPVLATCAGLILLAEELANDSARYFATLPVRVKRNAYGRQLGSFYTEEQFGDLGKVPMTFIRAPYIESVGEDVEILAKVNGDIVGVRYKNQIGLSFHPELNGDRRIHQMFLDSISGGKSFPCTQKAV.

Position 47-49 (47-49 (GES)) interacts with L-glutamine. The active-site Nucleophile is C79. L-glutamine-binding positions include R106 and 133-134 (IR). Active-site charge relay system residues include H169 and E171.

The protein belongs to the glutaminase PdxT/SNO family. In terms of assembly, in the presence of PdxS, forms a dodecamer of heterodimers. Only shows activity in the heterodimer.

The enzyme catalyses aldehydo-D-ribose 5-phosphate + D-glyceraldehyde 3-phosphate + L-glutamine = pyridoxal 5'-phosphate + L-glutamate + phosphate + 3 H2O + H(+). The catalysed reaction is L-glutamine + H2O = L-glutamate + NH4(+). It functions in the pathway cofactor biosynthesis; pyridoxal 5'-phosphate biosynthesis. In terms of biological role, catalyzes the hydrolysis of glutamine to glutamate and ammonia as part of the biosynthesis of pyridoxal 5'-phosphate. The resulting ammonia molecule is channeled to the active site of PdxS. The chain is Pyridoxal 5'-phosphate synthase subunit PdxT from Desulfitobacterium hafniense (strain DSM 10664 / DCB-2).